The sequence spans 423 residues: Serine hydroxymethyltransferase (423 aa).

(6S)-5,6,7,8-tetrahydrofolate-binding positions include Leu121 and 125–127 (GHL). Lys230 carries the post-translational modification N6-(pyridoxal phosphate)lysine. 355–357 (SPF) contacts (6S)-5,6,7,8-tetrahydrofolate.

This sequence belongs to the SHMT family. As to quaternary structure, homodimer. It depends on pyridoxal 5'-phosphate as a cofactor.

The protein localises to the cytoplasm. It carries out the reaction (6R)-5,10-methylene-5,6,7,8-tetrahydrofolate + glycine + H2O = (6S)-5,6,7,8-tetrahydrofolate + L-serine. Its pathway is one-carbon metabolism; tetrahydrofolate interconversion. It participates in amino-acid biosynthesis; glycine biosynthesis; glycine from L-serine: step 1/1. Its function is as follows. Catalyzes the reversible interconversion of serine and glycine with tetrahydrofolate (THF) serving as the one-carbon carrier. This reaction serves as the major source of one-carbon groups required for the biosynthesis of purines, thymidylate, methionine, and other important biomolecules. Also exhibits THF-independent aldolase activity toward beta-hydroxyamino acids, producing glycine and aldehydes, via a retro-aldol mechanism. The chain is Serine hydroxymethyltransferase from Hydrogenovibrio crunogenus (strain DSM 25203 / XCL-2) (Thiomicrospira crunogena).